We begin with the raw amino-acid sequence, 1072 residues long: MPKRLDINTILVIGSGPIVIGQAAEFDYSGTQACQSLKEEGYKVILVNSNPATIMTDTATADKVYIEPLTLEFVSRIIRKERPDAILPTLGGQTGLNMAVELAKSGVLDECGVEILGTKLSAIEQAEDRDLFRTLMQDLNEPTPPSEIIHNLDEAYGFVNEIGYPVIVRPAFTLGGTGGGICHNEEELIEIVTSGLKHSPVTQCLLEKSIAGCKEIEYEVMRDSNDNAIVVCNMENIDPVGVHTGDSIVVAPSQTLSDREYQMLRNTSLRIIRALGIEGGCNVQLALDPYSFQYYVIEVNPRVSRSSALASKATGYPIAKLAAKIAVGLTLDEIVNPVTQKTYACFEPALDYVVSKIPRWPFDKFESANRTLGTQMKATGEVMSIGRNLEESLLKAVRSLELGIYHLELDHLKELDKETMKKRIIKADDERLFIVAEAIRQGVTKEEINEWCEMDFFFLQKVENIVNMEREVKANVGNMEVLQIAKEMGFSDHYIAAAWNKTEREIYDMRKENNMMPVFKMVDTCAAEFESATPYYYSTYADENESIVTDRKSVVVLGSGPIRIGQGVEFDYATVHSVWAIKEAGYEAIIINNNPETVSTDFSISDKLYFEPLTIEDVMHIIDLEKPEGVIVQFGGQTAINLAAKLEEHGVKILGTSLEDLDRAEDRDKFEAALTKLGIPQPVGKTATTVEQAVAIAEEIGYPVLVRPSYVLGGRAMEIVYRQEELLHYMKNAVKVHADHPVLIDRYMVGKEIEVDAISDGENVFIPGIMEHIERAGVHSGDSIGVYPPQSLSEKLKEQIIEHTIALGKGLNIVGLLNIQFVVFKDQVYVIEVNPRASRTVPFLSKITGVPMANVATKVILGQDLVEQGYGTGYHPEEKEVYVKAPVFSFAKLRSVDTTLGPEMKSTGEVMGKDLTLEKALYKGLVASGINIPTHGSVIITVADKDKEEAMEIAKRFHEIGYNLLATAGTAQSLEEQNIPVQVVNKIDSEDYNLLDIIRQGKAQFVINTLTKGKQPARDGFRIRRESVENGVACLTSLDTTRAILRVLESMTFSAHSMKEITQTKRHEVVHA.

Residues 1–401 are carboxyphosphate synthetic domain; sequence MPKRLDINTI…SLLKAVRSLE (401 aa). 12 residues coordinate ATP: arginine 129, arginine 169, glycine 175, glycine 176, lysine 208, isoleucine 210, glutamate 215, glycine 241, valine 242, histidine 243, glutamine 284, and glutamate 298. The ATP-grasp 1 domain occupies 133-327; that stretch reads RTLMQDLNEP…IAKLAAKIAV (195 aa). Residues glutamine 284, glutamate 298, and asparagine 300 each coordinate Mg(2+). Mn(2+)-binding residues include glutamine 284, glutamate 298, and asparagine 300. An oligomerization domain region spans residues 402-546; it reads LGIYHLELDH…YSTYADENES (145 aa). Positions 547–929 are carbamoyl phosphate synthetic domain; the sequence is IVTDRKSVVV…ALYKGLVASG (383 aa). The 191-residue stretch at 671–861 folds into the ATP-grasp 2 domain; sequence EAALTKLGIP…MANVATKVIL (191 aa). ATP is bound by residues arginine 707, arginine 746, glutamate 752, glycine 777, valine 778, histidine 779, serine 780, glutamine 820, and glutamate 832. Residues glutamine 820, glutamate 832, and asparagine 834 each contribute to the Mg(2+) site. Mn(2+) is bound by residues glutamine 820, glutamate 832, and asparagine 834. Positions 930–1072 constitute an MGS-like domain; that stretch reads INIPTHGSVI…QTKRHEVVHA (143 aa). The allosteric domain stretch occupies residues 930-1072; sequence INIPTHGSVI…QTKRHEVVHA (143 aa).

Belongs to the CarB family. In terms of assembly, composed of two chains; the small (or glutamine) chain promotes the hydrolysis of glutamine to ammonia, which is used by the large (or ammonia) chain to synthesize carbamoyl phosphate. Tetramer of heterodimers (alpha,beta)4. Mg(2+) serves as cofactor. It depends on Mn(2+) as a cofactor.

The catalysed reaction is hydrogencarbonate + L-glutamine + 2 ATP + H2O = carbamoyl phosphate + L-glutamate + 2 ADP + phosphate + 2 H(+). The enzyme catalyses hydrogencarbonate + NH4(+) + 2 ATP = carbamoyl phosphate + 2 ADP + phosphate + 2 H(+). The protein operates within amino-acid biosynthesis; L-arginine biosynthesis; carbamoyl phosphate from bicarbonate: step 1/1. Its pathway is pyrimidine metabolism; UMP biosynthesis via de novo pathway; (S)-dihydroorotate from bicarbonate: step 1/3. In terms of biological role, large subunit of the glutamine-dependent carbamoyl phosphate synthetase (CPSase). CPSase catalyzes the formation of carbamoyl phosphate from the ammonia moiety of glutamine, carbonate, and phosphate donated by ATP, constituting the first step of 2 biosynthetic pathways, one leading to arginine and/or urea and the other to pyrimidine nucleotides. The large subunit (synthetase) binds the substrates ammonia (free or transferred from glutamine from the small subunit), hydrogencarbonate and ATP and carries out an ATP-coupled ligase reaction, activating hydrogencarbonate by forming carboxy phosphate which reacts with ammonia to form carbamoyl phosphate. The sequence is that of Carbamoyl phosphate synthase large chain from Bacillus cereus (strain B4264).